A 653-amino-acid polypeptide reads, in one-letter code: Acetyl-coenzyme A synthetase (653 aa).

Residues 195–198 (RGGK) and threonine 314 each bind CoA. ATP is bound by residues 390 to 392 (GEP), 414 to 419 (DTWWQT), aspartate 505, and arginine 520. Serine 528 provides a ligand contact to CoA. Arginine 531 contributes to the ATP binding site. Residues valine 542 and valine 547 each coordinate Mg(2+). Lysine 617 is subject to N6-acetyllysine.

It belongs to the ATP-dependent AMP-binding enzyme family. Requires Mg(2+) as cofactor. Acetylated. Deacetylation by the SIR2-homolog deacetylase activates the enzyme.

It catalyses the reaction acetate + ATP + CoA = acetyl-CoA + AMP + diphosphate. Catalyzes the conversion of acetate into acetyl-CoA (AcCoA), an essential intermediate at the junction of anabolic and catabolic pathways. AcsA undergoes a two-step reaction. In the first half reaction, AcsA combines acetate with ATP to form acetyl-adenylate (AcAMP) intermediate. In the second half reaction, it can then transfer the acetyl group from AcAMP to the sulfhydryl group of CoA, forming the product AcCoA. The polypeptide is Acetyl-coenzyme A synthetase (Pasteurella multocida (strain Pm70)).